Consider the following 394-residue polypeptide: Cytohesin-4 (394 aa).

Residues 12-65 (SSGETEELQRIKWHRKQLLEDIQKLKDEIADVFAQIDCFESAEESRMAQKEKEL) adopt a coiled-coil conformation. The SEC7 domain occupies 54 to 241 (EESRMAQKEK…RNLFDSIKSE (188 aa)). Residues 259-375 (NPDREGWLLK…WIESIRASIT (117 aa)) form the PH domain. A 1,2-diacyl-sn-glycero-3-phospho-(1D-myo-inositol-3,4,5-trisphosphate) is bound by residues 268–275 (KLGGRVKT), arginine 279, tyrosine 290, and arginine 300. The tract at residues 386 to 394 (RKKKIASKQ) is C-terminal autoinhibitory region.

In terms of tissue distribution, expressed predominantly in peripheral blood leukocytes.

It is found in the cell membrane. Its function is as follows. Promotes guanine-nucleotide exchange on ARF1 and ARF5. Promotes the activation of ARF factors through replacement of GDP with GTP. The chain is Cytohesin-4 (CYTH4) from Homo sapiens (Human).